Here is a 174-residue protein sequence, read N- to C-terminus: Mitochondrial protein import protein ZIM17 (174 aa).

A mitochondrion-targeting transit peptide spans 1-47 (MIPRTRTLLQSKIPITRYFARCWAPRVRYNVCRTLPAAALHTNIIAH). Residues 64-159 (VDKPKMMIAF…LKDVLGKYAK (96 aa)) form a DNL-type zinc finger. Zn(2+) is bound by residues Cys-75, Cys-78, Cys-100, and Cys-103.

In terms of assembly, interacts with SSC1; binds to the nucleotide-free state as well as to the ADP- or ATP-bound state of SSC1. Requires Zn(2+) as cofactor.

Its subcellular location is the mitochondrion inner membrane. Involved in protein import into mitochondria. Acts as a Hsp70-specific chaperone that prevents self-aggregation of the matrix Hsp70 chaperones SSC1 (mtHSP70) and SSQ1, thereby maintaining their function in mitochondrial protein import and Fe/S protein biosynthesis. May act together with PAM18 as co-chaperone to facilitate recognition and folding of imported proteins by SSC1 in the mitochondrial matrix. The chain is Mitochondrial protein import protein ZIM17 (ZIM17) from Saccharomyces cerevisiae (strain AWRI1631) (Baker's yeast).